Here is a 1558-residue protein sequence, read N- to C-terminus: Eukaryotic translation initiation factor 2-alpha kinase 1 (1558 aa).

In terms of domain architecture, Protein kinase spans 429 to 789 (FFEEKILGCG…AYNLLHESVL (361 aa)). Residues 435–443 (LGCGGFGYV) and lysine 458 each bind ATP. Aspartate 660 serves as the catalytic Proton acceptor. Residues 1014 to 1033 (GTSTNNNNNNNNNNMGNNNI) are disordered.

The protein belongs to the protein kinase superfamily. Ser/Thr protein kinase family. GCN2 subfamily. Post-translationally, auto-phosphorylated.

It catalyses the reaction L-seryl-[protein] + ATP = O-phospho-L-seryl-[protein] + ADP + H(+). The catalysed reaction is L-threonyl-[protein] + ATP = O-phospho-L-threonyl-[protein] + ADP + H(+). In terms of biological role, in blood stage parasites, phosphorylates translation factor eIF2alpha in response to amino acid starvation. During the asexual blood stage, involved in the response to the host hormone melatonin which is used by the parasite to modulate its cell cycle. The protein is Eukaryotic translation initiation factor 2-alpha kinase 1 of Plasmodium falciparum (isolate 3D7).